We begin with the raw amino-acid sequence, 141 residues long: Large ribosomal subunit protein uL11 (141 aa).

It belongs to the universal ribosomal protein uL11 family. In terms of assembly, part of the ribosomal stalk of the 50S ribosomal subunit. Interacts with L10 and the large rRNA to form the base of the stalk. L10 forms an elongated spine to which L12 dimers bind in a sequential fashion forming a multimeric L10(L12)X complex. Post-translationally, one or more lysine residues are methylated.

Forms part of the ribosomal stalk which helps the ribosome interact with GTP-bound translation factors. The sequence is that of Large ribosomal subunit protein uL11 from Amoebophilus asiaticus (strain 5a2).